Reading from the N-terminus, the 189-residue chain is uncharacterized protein (189 aa).

One can recognise an HTH tetR-type domain in the interval 2 to 62 (RPTNKRILDA…ALLSQHSSNR (61 aa)). The segment at residues 25-44 (TTKEIAEKANVSEATIFRNF) is a DNA-binding region (H-T-H motif).

This is an uncharacterized protein from Bacillus subtilis (strain 168).